Reading from the N-terminus, the 143-residue chain is Translation initiation factor 2 subunit beta (143 aa).

It belongs to the eIF-2-beta/eIF-5 family. As to quaternary structure, heterotrimer composed of an alpha, a beta and a gamma chain.

EIF-2 functions in the early steps of protein synthesis by forming a ternary complex with GTP and initiator tRNA. This chain is Translation initiation factor 2 subunit beta (eif2b), found in Methanocaldococcus jannaschii (strain ATCC 43067 / DSM 2661 / JAL-1 / JCM 10045 / NBRC 100440) (Methanococcus jannaschii).